The chain runs to 185 residues: TATA-box-binding protein (185 aa).

2 tandem repeats follow at residues 3-78 and 94-176.

Belongs to the TBP family.

Its function is as follows. General factor that plays a role in the activation of archaeal genes transcribed by RNA polymerase. Binds specifically to the TATA box promoter element which lies close to the position of transcription initiation. The protein is TATA-box-binding protein of Methanopyrus kandleri (strain AV19 / DSM 6324 / JCM 9639 / NBRC 100938).